Consider the following 477-residue polypeptide: Probable F-box protein At5g25300 (477 aa).

Residues 346-377 are a coiled coil; it reads VDMNKEDSQIEINEKETKINQEHDQSDETQAK. One can recognise an F-box domain in the interval 412–458; sequence SPPWSELPGDILRSVFERLSFVDFQRAKQTCPIKRSKSNCLRLWLIT.

This chain is Probable F-box protein At5g25300, found in Arabidopsis thaliana (Mouse-ear cress).